An 843-amino-acid polypeptide reads, in one-letter code: Protein P (843 aa).

A terminal protein domain (TP) region spans residues 1–177 (MPLSYQHFRK…FCGSPYSWEQ (177 aa)). The interval 178–346 (DLQHGRLVFQ…YCLCHIVNLI (169 aa)) is spacer. 2 disordered regions span residues 220-269 (KSRL…HNCA) and 291-316 (TSKGHSSSGHAVELHHFPPNSSRSRS). The segment at 347–690 (EDWGPCTEHG…YLNLYPVARQ (344 aa)) is polymerase/reverse transcriptase domain (RT). Residues 357 to 600 (EHRIRTPRTP…YSLNFMGYVI (244 aa)) enclose the Reverse transcriptase domain. Residues Asp429, Asp551, and Asp552 each coordinate Mg(2+).

It belongs to the hepadnaviridae P protein family.

The enzyme catalyses DNA(n) + a 2'-deoxyribonucleoside 5'-triphosphate = DNA(n+1) + diphosphate. It carries out the reaction Endonucleolytic cleavage to 5'-phosphomonoester.. Activated by host HSP70 and HSP40 in vitro to be able to bind the epsilon loop of the pgRNA. Because deletion of the RNase H region renders the protein partly chaperone-independent, the chaperones may be needed indirectly to relieve occlusion of the RNA-binding site by this domain. Inhibited by several reverse-transcriptase inhibitors: Lamivudine, Adefovir and Entecavir. In terms of biological role, multifunctional enzyme that converts the viral RNA genome into dsDNA in viral cytoplasmic capsids. This enzyme displays a DNA polymerase activity that can copy either DNA or RNA templates, and a ribonuclease H (RNase H) activity that cleaves the RNA strand of RNA-DNA heteroduplexes in a partially processive 3'- to 5'-endonucleasic mode. Neo-synthesized pregenomic RNA (pgRNA) are encapsidated together with the P protein, and reverse-transcribed inside the nucleocapsid. Initiation of reverse-transcription occurs first by binding the epsilon loop on the pgRNA genome, and is initiated by protein priming, thereby the 5'-end of (-)DNA is covalently linked to P protein. Partial (+)DNA is synthesized from the (-)DNA template and generates the relaxed circular DNA (RC-DNA) genome. After budding and infection, the RC-DNA migrates in the nucleus, and is converted into a plasmid-like covalently closed circular DNA (cccDNA). The activity of P protein does not seem to be necessary for cccDNA generation, and is presumably released from (+)DNA by host nuclear DNA repair machinery. This is Protein P from Homo sapiens (Human).